A 586-amino-acid chain; its full sequence is U-box domain-containing protein 73 (586 aa).

The disordered stretch occupies residues 21–122 (KADMSGLQRS…AAGADDGPTR (102 aa)). The span at 50 to 60 (RSAPTSPLRTP) shows a compositional bias: low complexity. The U-box domain occupies 182-258 (PIPIAHDGTL…SAWCLDHSDL (77 aa)).

It carries out the reaction S-ubiquitinyl-[E2 ubiquitin-conjugating enzyme]-L-cysteine + [acceptor protein]-L-lysine = [E2 ubiquitin-conjugating enzyme]-L-cysteine + N(6)-ubiquitinyl-[acceptor protein]-L-lysine.. The protein operates within protein modification; protein ubiquitination. Functionally, possesses E3 ubiquitin-protein ligase in vitro. This is U-box domain-containing protein 73 (PUB73) from Oryza sativa subsp. japonica (Rice).